The chain runs to 265 residues: Acyl-[acyl-carrier-protein]--UDP-N-acetylglucosamine O-acyltransferase (265 aa).

This sequence belongs to the transferase hexapeptide repeat family. LpxA subfamily. As to quaternary structure, homotrimer.

Its subcellular location is the cytoplasm. The enzyme catalyses a (3R)-hydroxyacyl-[ACP] + UDP-N-acetyl-alpha-D-glucosamine = a UDP-3-O-[(3R)-3-hydroxyacyl]-N-acetyl-alpha-D-glucosamine + holo-[ACP]. The protein operates within glycolipid biosynthesis; lipid IV(A) biosynthesis; lipid IV(A) from (3R)-3-hydroxytetradecanoyl-[acyl-carrier-protein] and UDP-N-acetyl-alpha-D-glucosamine: step 1/6. In terms of biological role, involved in the biosynthesis of lipid A, a phosphorylated glycolipid that anchors the lipopolysaccharide to the outer membrane of the cell. The polypeptide is Acyl-[acyl-carrier-protein]--UDP-N-acetylglucosamine O-acyltransferase (Polynucleobacter asymbioticus (strain DSM 18221 / CIP 109841 / QLW-P1DMWA-1) (Polynucleobacter necessarius subsp. asymbioticus)).